The sequence spans 94 residues: Histone-like DNA-binding protein (94 aa).

Belongs to the bacterial histone-like protein family.

The protein is Histone-like DNA-binding protein of Rickettsia bellii (strain RML369-C).